A 281-amino-acid chain; its full sequence is Aldo-keto reductase MAP_3007 (281 aa).

The Proton donor role is filled by Tyr-56. NADPH is bound by residues Leu-196, Ile-234, Arg-236, Ser-237, Ala-238, Ser-245, and Arg-272.

Belongs to the aldo/keto reductase family.

The chain is Aldo-keto reductase MAP_3007 from Mycolicibacterium paratuberculosis (strain ATCC BAA-968 / K-10) (Mycobacterium paratuberculosis).